The following is a 138-amino-acid chain: Small ribosomal subunit protein uS11 (138 aa).

Residues 1-12 show a composition bias toward low complexity; sequence MPPKKANAAGPK. The tract at residues 1 to 23 is disordered; sequence MPPKKANAAGPKKGQKTRKREKK. The segment covering 13–22 has biased composition (basic residues); it reads KGQKTRKREK.

Belongs to the universal ribosomal protein uS11 family. In terms of assembly, part of the 30S ribosomal subunit. Interacts with proteins S7 and S18. Binds to IF-3.

Located on the platform of the 30S subunit, it bridges several disparate RNA helices of the 16S rRNA. Forms part of the Shine-Dalgarno cleft in the 70S ribosome. The polypeptide is Small ribosomal subunit protein uS11 (Mycobacterium leprae (strain Br4923)).